Reading from the N-terminus, the 143-residue chain is Putative pre-16S rRNA nuclease (143 aa).

It belongs to the YqgF nuclease family.

The protein localises to the cytoplasm. In terms of biological role, could be a nuclease involved in processing of the 5'-end of pre-16S rRNA. The polypeptide is Putative pre-16S rRNA nuclease (ybeB) (Lactococcus lactis subsp. lactis (strain IL1403) (Streptococcus lactis)).